Here is a 117-residue protein sequence, read N- to C-terminus: Mini-circle uncharacterized 12.9 kDa protein (117 aa).

This chain is Mini-circle uncharacterized 12.9 kDa protein, found in Streptomyces coelicolor (strain ATCC BAA-471 / A3(2) / M145).